The chain runs to 553 residues: Effector protein HopAB2 (553 aa).

Disordered stretches follow at residues 1 to 123, 198 to 227, and 239 to 275; these read MAGI…APRR, AVHQQAASAPVRSPTPTPASPAASSSGSSQ, and APNQGRSSNTAASQTPVDRSPPRVNQRPIRVDRAAMR. Residues 1-308 are host recognition; Pto interaction; that stretch reads MAGINRAGPS…LRTALERHVM (308 aa). Low complexity predominate over residues 24–39; that stretch reads SGQAHGSGSGASSSNS. The segment covering 47 to 60 has biased composition (pro residues); the sequence is SNTPPSNAPAPPPT. Low complexity predominate over residues 217–227; it reads SPAASSSGSSQ. Residues 242–255 show a composition bias toward polar residues; it reads QGRSSNTAASQTPV. Positions 309–553 are E3 ubiquitin-protein ligase; it reads QRLPIPLDIG…IAKYAFRIVP (245 aa). An Interaction with Pto-kinase motif is present at residues 325–328; it reads GINP. A disordered region spans residues 361 to 380; sequence APRPAVPVAPATASRRPDGT. Residues 512–529 are required for E3 ubiquitin-protein ligase and anti-PCD activities and pathogenesis; sequence KDLAFMDMKKLAQFLAGK.

This sequence belongs to the HopAB family. Interacts physically with plant cell Pto. Post-translationally, auto-ubiquitinated.

It localises to the secreted. In terms of biological role, effector protein involved in gene-for-gene resistance in tomato plants. It is recognized by the host Pto resistance protein and elicits Pto and Prf-dependent hypersensitive response (HR) and programmed cell death (PCD), resulting in host immunity. In susceptible plants, acts as a virulence factor by suppressing PCD and HR-based plant immunity. This function requires its E3 ubiquitin ligase activity probably by recruiting E2 enzymes and transferring ubiquitin molecules to cellular proteins involved in regulation of PCD and targeting them for degradation. Also, induces expression of host genes involved in ethylene biosynthesis and signaling, in particular ACO1 and ACO2, encoding the ethylene-forming enzyme ACC oxidase. The sequence is that of Effector protein HopAB2 (hopAB2) from Pseudomonas syringae pv. tomato (strain ATCC BAA-871 / DC3000).